The primary structure comprises 199 residues: NAD(P)H dehydrogenase (quinone) (199 aa).

In terms of domain architecture, Flavodoxin-like spans 4–190 (VLVLYYSAYG…DGARYQGRKI (187 aa)). FMN is bound by residues 10–15 (SAYGHI) and 78–80 (TRF). Position 12 (Tyr-12) interacts with NAD(+). Residue Trp-98 participates in substrate binding. FMN is bound by residues 113–119 (STATQHG) and His-134.

Belongs to the WrbA family. FMN is required as a cofactor.

The catalysed reaction is a quinone + NADH + H(+) = a quinol + NAD(+). It carries out the reaction a quinone + NADPH + H(+) = a quinol + NADP(+). The chain is NAD(P)H dehydrogenase (quinone) from Xanthobacter autotrophicus (strain ATCC BAA-1158 / Py2).